Consider the following 136-residue polypeptide: Mediator of RNA polymerase II transcription subunit 31 (136 aa).

Over residues 117 to 128 (AEQQQQQQPQAP) the composition is skewed to low complexity. The interval 117 to 136 (AEQQQQQQPQAPSHANTTSK) is disordered.

The protein belongs to the Mediator complex subunit 31 family. As to quaternary structure, component of the Mediator complex.

It localises to the nucleus. Functionally, component of the Mediator complex, a coactivator involved in the regulated transcription of nearly all RNA polymerase II-dependent genes. Mediator functions as a bridge to convey information from gene-specific regulatory proteins to the basal RNA polymerase II transcription machinery. Mediator is recruited to promoters by direct interactions with regulatory proteins and serves as a scaffold for the assembly of a functional preinitiation complex with RNA polymerase II and the general transcription factors. This Danio rerio (Zebrafish) protein is Mediator of RNA polymerase II transcription subunit 31 (med31).